The chain runs to 134 residues: Transcription antitermination protein NusB (134 aa).

Belongs to the NusB family.

In terms of biological role, involved in transcription antitermination. Required for transcription of ribosomal RNA (rRNA) genes. Binds specifically to the boxA antiterminator sequence of the ribosomal RNA (rrn) operons. The protein is Transcription antitermination protein NusB of Halothermothrix orenii (strain H 168 / OCM 544 / DSM 9562).